A 65-amino-acid polypeptide reads, in one-letter code: SPbeta prophage-derived uncharacterized protein YopU (65 aa).

This chain is SPbeta prophage-derived uncharacterized protein YopU (yopU), found in Bacillus subtilis (strain 168).